Consider the following 567-residue polypeptide: MFLPTTREEMKKLGWRELDVILVTGDAYVDHPSFGVALIGHYLVSHGFKVGIIAQPDWRTEKDITRLGRPRLFFGVTAGNVDSMVANYTASKKKRKTDDYTPGGSGGKRPDRATIVYTNLIKRFFPEVPVVLGGLEASLRRFAHYDWWSEKVRKSILVDSKADLLVYGMGEKAVLEIAQILSRTGDIEKCKSVRGVVWWASQKPEEGIELPSYDEISENPEKYAEALKLQTWYTDPYKNILIYQKQDTRYVVQNPPQLPLSQEELDRLYLLPFEREVHPFYAKMGRVKAIETVKFSITAVRGCFGSCSFCALTQHQTTHVSYRSKDSILEEVRILTKKKDFKGTITDVGGPTANLYGSSCSIRETKGQCQKFCLYPSVCKIVRPNHDEFISLLESIRKIPGVRNVFVSSGIRHDFVLAEKDPDVFIRELVKYTPGQLKLAPEHAHPKVLSLMRKPPVELFLEFKKRFETLAKKMGKRKYVIGYFIVGHPGEGWRENNYLRDFILKHLGYFPQQIQIFTPTPGTVSTAMYYSGLDPFTGEKVHVERSLKVRNKMKENVLFKKKGREKR.

In terms of domain architecture, Radical SAM core spans 288–560 (KAIETVKFSI…NKMKENVLFK (273 aa)). [4Fe-4S] cluster is bound by residues cysteine 303, cysteine 307, and cysteine 310.

It belongs to the UPF0313 family. Requires [4Fe-4S] cluster as cofactor.

The polypeptide is UPF0313 protein CTN_0332 (Thermotoga neapolitana (strain ATCC 49049 / DSM 4359 / NBRC 107923 / NS-E)).